A 417-amino-acid polypeptide reads, in one-letter code: Carboxypeptidase B (417 aa).

Positions 1–16 (MLAFLILVTVTLASAH) are cleaved as a signal peptide. The propeptide at 17–110 (HSGEHFEGDK…LEAQFDSRVR (94 aa)) is activation peptide. The Peptidase M14 domain occupies 118–412 (KYNNWETIEA…LAIKYVTSYV (295 aa)). Cys173 and Cys186 are disulfide-bonded. Residues His176 and Glu179 each contribute to the Zn(2+) site. Residues 176–179 (HARE), Arg234, and 251–252 (NR) each bind substrate. 2 disulfide bridges follow: Cys245–Cys268 and Cys259–Cys273. A Zn(2+)-binding site is contributed by His304. Substrate-binding positions include 305-306 (SY) and Tyr356. The active-site Proton donor/acceptor is Glu378.

Belongs to the peptidase M14 family. Zn(2+) is required as a cofactor.

It is found in the secreted. The protein localises to the zymogen granule lumen. It catalyses the reaction Preferential release of a C-terminal lysine or arginine amino acid.. This is Carboxypeptidase B (CPB1) from Bos taurus (Bovine).